Here is a 133-residue protein sequence, read N- to C-terminus: S-protein homolog 9 (133 aa).

An N-terminal signal peptide occupies residues 1–20; that stretch reads MNRLSCFLLVIGLCIGLSNA.

This sequence belongs to the plant self-incompatibility (S1) protein family.

Its subcellular location is the secreted. The sequence is that of S-protein homolog 9 from Arabidopsis thaliana (Mouse-ear cress).